A 363-amino-acid chain; its full sequence is Small ribosomal subunit biogenesis GTPase RsgA (363 aa).

In terms of domain architecture, CP-type G spans 112 to 268; it reads HQQVIAANID…LIDTPGMREL (157 aa). Residues 157-160 and 210-218 contribute to the GTP site; these read TKAD and GSSGAGKST. Zn(2+) contacts are provided by Cys-291, Cys-296, His-298, and Cys-304. The tract at residues 340-363 is disordered; sequence RVAQNNRGKGSGKRPASIDRPGRR.

Belongs to the TRAFAC class YlqF/YawG GTPase family. RsgA subfamily. Monomer. Associates with 30S ribosomal subunit, binds 16S rRNA. Requires Zn(2+) as cofactor.

The protein localises to the cytoplasm. Functionally, one of several proteins that assist in the late maturation steps of the functional core of the 30S ribosomal subunit. Helps release RbfA from mature subunits. May play a role in the assembly of ribosomal proteins into the subunit. Circularly permuted GTPase that catalyzes slow GTP hydrolysis, GTPase activity is stimulated by the 30S ribosomal subunit. This Xanthomonas oryzae pv. oryzae (strain PXO99A) protein is Small ribosomal subunit biogenesis GTPase RsgA.